Consider the following 339-residue polypeptide: MPKQKVAILGPGSWGTALAQVLNDNGHEVRLWGNIPEQINEINTRHTNSHYFKDIVLDEAIKATLDLKEALADIDAILFVVPTKVTRLVAKQVAQVLDHKAIVMHASKGLEPGTHERLSTILEEEIPAQLRSEVVVVSGPSHAEETIVRDITLITAASKDITAARYVQTLFSNHYFRLYTNTDVIGVETAGALKNIIAVGAGALHGLGYGDNAKAAVITRGLAEITRLGVKLGADPLTYSGLSGVGDLIVTGTSVHSRNWRAGAALGRGEKLKDIENNMGMVIEGISTTKVAYEIAQELGVYMPITSAIYKSIYEGADIKESILGMMSNEFRSENEWHT.

NADPH contacts are provided by S13, W14, and K108. Positions 108, 139, and 141 each coordinate sn-glycerol 3-phosphate. A143 provides a ligand contact to NADPH. 5 residues coordinate sn-glycerol 3-phosphate: K194, D247, S257, R258, and N259. K194 functions as the Proton acceptor in the catalytic mechanism. R258 lines the NADPH pocket. The NADPH site is built by V282 and E284.

The protein belongs to the NAD-dependent glycerol-3-phosphate dehydrogenase family.

Its subcellular location is the cytoplasm. The enzyme catalyses sn-glycerol 3-phosphate + NAD(+) = dihydroxyacetone phosphate + NADH + H(+). The catalysed reaction is sn-glycerol 3-phosphate + NADP(+) = dihydroxyacetone phosphate + NADPH + H(+). Its pathway is membrane lipid metabolism; glycerophospholipid metabolism. In terms of biological role, catalyzes the reduction of the glycolytic intermediate dihydroxyacetone phosphate (DHAP) to sn-glycerol 3-phosphate (G3P), the key precursor for phospholipid synthesis. In Streptococcus equi subsp. equi (strain 4047), this protein is Glycerol-3-phosphate dehydrogenase [NAD(P)+].